A 218-amino-acid polypeptide reads, in one-letter code: Putative glutamine transport system permease protein GlnP (218 aa).

The 190-residue stretch at threonine 19 to alanine 208 folds into the ABC transmembrane type-1 domain. The next 4 helical transmembrane spans lie at tyrosine 25–valine 45, phenylalanine 57–proline 79, phenylalanine 86–isoleucine 108, and phenylalanine 187–isoleucine 207.

It belongs to the binding-protein-dependent transport system permease family. HisMQ subfamily.

The protein resides in the cell inner membrane. In terms of biological role, part of the binding-protein-dependent transport system for glutamine; probably responsible for the translocation of the substrate across the membrane. In Rickettsia bellii (strain RML369-C), this protein is Putative glutamine transport system permease protein GlnP (glnP).